A 257-amino-acid polypeptide reads, in one-letter code: UPF0246 protein Shew185_1115 (257 aa).

The protein belongs to the UPF0246 family.

This chain is UPF0246 protein Shew185_1115, found in Shewanella baltica (strain OS185).